The primary structure comprises 239 residues: Tumor necrosis factor ligand superfamily member 14 (239 aa).

The Cytoplasmic segment spans residues 1-37; sequence MESVVQPSVFVVDGQTDIPFRRLEQNHRRRRCGTVQV. A helical; Signal-anchor for type II membrane protein membrane pass occupies residues 38-58; sequence SLALVLLLGAGLATQGWFLLR. The Extracellular portion of the chain corresponds to 59–239; the sequence is LHQRLGDIVA…TRSYFGAFMV (181 aa). A THD domain is found at 92 to 239; it reads PAAHLTGANA…TRSYFGAFMV (148 aa). Residue N100 is glycosylated (N-linked (GlcNAc...) asparagine). C152 and C187 are joined by a disulfide. N191 carries an N-linked (GlcNAc...) asparagine glycan.

This sequence belongs to the tumor necrosis factor family. Homotrimer. Interacts with TNFRSF14. The soluble form derives from the membrane form by proteolytic processing.

The protein resides in the cell membrane. It is found in the secreted. Its function is as follows. Cytokine that binds to TNFRSF3/LTBR. Binding to the decoy receptor TNFRSF6B modulates its effects. Activates NFKB and stimulates the proliferation of T-cells. Acts as a ligand for TNFRSF14/HVEM. Upon binding to TNFRSF14/HVEM, delivers costimulatory signals to T cells, leading to T cell proliferation and IFNG production. In Mus musculus (Mouse), this protein is Tumor necrosis factor ligand superfamily member 14 (Tnfsf14).